A 217-amino-acid chain; its full sequence is Monomethylamine corrinoid protein 1 (217 aa).

One can recognise a B12-binding N-terminal domain in the interval 1-91 (MANQEIFDKL…ELEKNKKEGE (91 aa)). The B12-binding domain occupies 93–217 (AGLAITFVAE…AAKVALEVMK (125 aa)). His106 provides a ligand contact to methylcob(III)alamin.

In terms of assembly, can form a complex with MtmB.

Its pathway is one-carbon metabolism; methanogenesis from methylamine. Acts as a methyl group carrier between MtmB and MtbA. The polypeptide is Monomethylamine corrinoid protein 1 (mtmC1) (Methanosarcina barkeri).